The chain runs to 1005 residues: EvC complex member EVC (1005 aa).

Residues 1–21 (MTCTKDARLQLGREALQAAPT) lie on the Extracellular side of the membrane. A helical membrane pass occupies residues 22–42 (LLVPAVLLGGVLGLGLGLWLG). The Cytoplasmic segment spans residues 43–1005 (CRASHLRARL…SKILQKGSNL (963 aa)). Disordered regions lie at residues 58 to 98 (KRLL…EVCE), 150 to 180 (HQPAEASPASSLGSLSQAGKEDGSSSSSMRS), 834 to 853 (PSLESQTADGTHGASQGVQQ), and 914 to 1005 (LPEN…GSNL). 2 stretches are compositionally biased toward polar residues: residues 157-166 (PASSLGSLSQ) and 835-853 (SLESQTADGTHGASQGVQQ). Positions 939–956 (PPREREDLGTPNDDHLAL) are enriched in basic and acidic residues. The segment covering 993–1005 (ESTSKILQKGSNL) has biased composition (polar residues).

In terms of assembly, component of the EvC complex composed of EFCAB7, IQCE, EVC2 and EVC; built from two subcomplexes, EVC2:EVC and EFCAB7:IQCE. Interacts with EVC2. Interacts with EFCAB7. Interacts with IQCE. In terms of tissue distribution, expressed in the developing skeleton and the orofacial region. Expression is general to all the cartilaginous components of the skeleton, including the chondrocranium, the vertebrae, the rib cage, and the axial skeleton by 15.5 dpc.

It is found in the cell membrane. The protein resides in the cytoplasm. Its subcellular location is the cytoskeleton. It localises to the cilium basal body. The protein localises to the cell projection. It is found in the cilium. The protein resides in the cilium membrane. Its function is as follows. Component of the EvC complex that positively regulates ciliary Hedgehog (Hh) signaling. Involved in endochondral growth and skeletal development. The chain is EvC complex member EVC (Evc) from Mus musculus (Mouse).